The chain runs to 354 residues: Hyaluronan and proteoglycan link protein 1 (354 aa).

Positions 1 to 15 (MKSLLLLVLISICWA) are excised as a propeptide. Asparagine 21 and asparagine 56 each carry an N-linked (GlcNAc...) asparagine glycan. The Ig-like V-type domain maps to 38-152 (PHLLVEAEQA…EGLEDDTVVV (115 aa)). Disulfide bonds link cysteine 61–cysteine 139, cysteine 181–cysteine 252, cysteine 205–cysteine 226, cysteine 279–cysteine 349, and cysteine 304–cysteine 325. Link domains lie at 159-254 (VVFP…FCFT) and 259-351 (GRFY…YCFR).

Belongs to the HAPLN family. Widely expressed. Weakly expressed in the brain.

The protein resides in the secreted. The protein localises to the extracellular space. It is found in the extracellular matrix. Its function is as follows. Stabilizes the aggregates of proteoglycan monomers with hyaluronic acid in the extracellular cartilage matrix. The sequence is that of Hyaluronan and proteoglycan link protein 1 (HAPLN1) from Homo sapiens (Human).